The following is a 111-amino-acid chain: ATP-dependent Clp protease adapter protein ClpS (111 aa).

This sequence belongs to the ClpS family. Binds to the N-terminal domain of the chaperone ClpA.

Its function is as follows. Involved in the modulation of the specificity of the ClpAP-mediated ATP-dependent protein degradation. The protein is ATP-dependent Clp protease adapter protein ClpS of Leptospira interrogans serogroup Icterohaemorrhagiae serovar copenhageni (strain Fiocruz L1-130).